Consider the following 159-residue polypeptide: 17 kDa surface antigen (159 aa).

An N-terminal signal peptide occupies residues 1 to 19 (MKLLSKIMIIALAASMLQA). Cysteine 20 carries N-palmitoyl cysteine lipidation. The S-diacylglycerol cysteine moiety is linked to residue cysteine 20.

This sequence belongs to the rickettsiale 17 kDa surface antigen family.

The protein resides in the cell outer membrane. The sequence is that of 17 kDa surface antigen (omp) from Rickettsia prowazekii (strain Madrid E).